We begin with the raw amino-acid sequence, 514 residues long: Uridylate cyclase (514 aa).

Guanylate cyclase domains are found at residues 49-190 and 286-428; these read VHMY…AKLA and VSLY…EKRQ. Residues Tyr52, Arg105, Phe178, 184–188, and 291–296 contribute to the a ribonucleoside 5'-triphosphate site; these read NHAAK and DIDGFT. Residues Asp291, Ile292, and Asp339 each coordinate Ca(2+). Position 291 (Asp291) interacts with Mn(2+). The tract at residues 495–514 is disordered; that stretch reads IRADERQVQPHSRQKVDGSR. The span at 496–514 shows a compositional bias: basic and acidic residues; sequence RADERQVQPHSRQKVDGSR.

The protein belongs to the adenylyl cyclase class-4/guanylyl cyclase family. Pyrimidine cyclase subfamily. As to quaternary structure, monomer. A divalent metal cation is required as a cofactor.

Its subcellular location is the cytoplasm. It carries out the reaction UTP = 3',5'-cyclic UMP + diphosphate. In terms of biological role, pycsar (pyrimidine cyclase system for antiphage resistance) provides immunity against bacteriophage. The pyrimidine cyclase (PycC) synthesizes cyclic nucleotides in response to infection; these serve as specific second messenger signals. The signals activate the adjacent effector, leading to bacterial cell death and abortive phage infection. A clade A Pycsar system. Functionally, the pyrimidine cyclase gene of a two-gene Pycsar system, generates cyclic UMP (cUMP) from UTP, has little to no activity on ATP, CTP or GTP. Expression of this and adjacent effector PaPycTIR (AC P0DV41) probably confers resistance to bacteriophage. The genes are probably only expressed in response to bacteriophage infection. Does not have adenylyl or guanylyl cyclase activity. This chain is Uridylate cyclase, found in Pseudomonas aeruginosa.